The primary structure comprises 220 residues: Metalloproteinase inhibitor 2 (220 aa).

The N-terminal stretch at 1–26 is a signal peptide; that stretch reads MPGAALPSLLAWLAVLLLGRARPADA. C27 contacts Zn(2+). 2 involved in metalloproteinase-binding regions span residues 27 to 30 and 95 to 96; these read CSCS and TE. Intrachain disulfides connect C27–C98, C29–C127, C39–C152, C154–C201, C159–C164, and C172–C193. One can recognise an NTR domain in the interval 27–152; the sequence is CSCSPIHPQQ…SLNQRYQMGC (126 aa).

The protein belongs to the protease inhibitor I35 (TIMP) family. Post-translationally, the activity of TIMP2 is dependent on the presence of disulfide bonds.

It localises to the secreted. In terms of biological role, complexes with metalloproteinases (such as collagenases) and irreversibly inactivates them by binding to their catalytic zinc cofactor. This is Metalloproteinase inhibitor 2 (TIMP2) from Gallus gallus (Chicken).